Here is a 681-residue protein sequence, read N- to C-terminus: DNA ligase (681 aa).

NAD(+)-binding positions include 35–39 (DAEYD), 84–85 (SL), and E115. K117 (N6-AMP-lysine intermediate) is an active-site residue. Residues R138, E175, K293, and K317 each contribute to the NAD(+) site. Residues C411, C414, C429, and C435 each coordinate Zn(2+). In terms of domain architecture, BRCT spans 598–681 (RTNLAVPGKT…SLLRDTSSSE (84 aa)).

It belongs to the NAD-dependent DNA ligase family. LigA subfamily. Mg(2+) is required as a cofactor. It depends on Mn(2+) as a cofactor.

The enzyme catalyses NAD(+) + (deoxyribonucleotide)n-3'-hydroxyl + 5'-phospho-(deoxyribonucleotide)m = (deoxyribonucleotide)n+m + AMP + beta-nicotinamide D-nucleotide.. Its function is as follows. DNA ligase that catalyzes the formation of phosphodiester linkages between 5'-phosphoryl and 3'-hydroxyl groups in double-stranded DNA using NAD as a coenzyme and as the energy source for the reaction. It is essential for DNA replication and repair of damaged DNA. The sequence is that of DNA ligase from Nitrosomonas europaea (strain ATCC 19718 / CIP 103999 / KCTC 2705 / NBRC 14298).